The primary structure comprises 281 residues: Auxin-responsive protein IAA10 (281 aa).

Disordered regions lie at residues 1 to 115 (MRGG…VVGW) and 130 to 157 (AKEN…EEGE). Low complexity predominate over residues 7-17 (GPTAGEPPGTE). Residues 18–35 (AEAEEVEESSAGDDEELE) are compositionally biased toward acidic residues. The EAR-like (transcriptional repression) motif lies at 36–40 (LGLSL). Low complexity-rich tracts occupy residues 36–49 (LGLS…QQQQ) and 63–84 (PAAA…AAAA). Residues 133 to 157 (NTSETDTKKTATNESDVQKDKEEGE) are compositionally biased toward basic and acidic residues. Residues 163-259 (AGWVKVNMDG…KRLRIMRTSD (97 aa)) enclose the PB1 domain.

The protein belongs to the Aux/IAA family. Homodimers and heterodimers. Highly expressed in flowers. Expressed in shoots.

It is found in the nucleus. Aux/IAA proteins are short-lived transcriptional factors that function as repressors of early auxin response genes at low auxin concentrations. This is Auxin-responsive protein IAA10 (IAA10) from Oryza sativa subsp. indica (Rice).